Reading from the N-terminus, the 971-residue chain is DNA-directed RNA polymerase subunit Rpo1N (971 aa).

At Met1 the chain carries Blocked amino end (Met). Residues Cys62, Cys65, Cys72, His75, Cys102, Cys105, Cys149, and Cys152 each contribute to the Zn(2+) site. The interval 185–204 is disordered; it reads SMQPDEDEDDAGVSPQELAE. Positions 527, 529, and 531 each coordinate Mg(2+). The tract at residues 951–971 is disordered; it reads VEEPPTNLSEHGAAWEVESDD.

Belongs to the RNA polymerase beta' chain family. As to quaternary structure, part of the RNA polymerase complex. It depends on Mg(2+) as a cofactor. The cofactor is Zn(2+). Post-translationally, the N-terminus is blocked.

The protein resides in the cytoplasm. It catalyses the reaction RNA(n) + a ribonucleoside 5'-triphosphate = RNA(n+1) + diphosphate. Functionally, DNA-dependent RNA polymerase (RNAP) catalyzes the transcription of DNA into RNA using the four ribonucleoside triphosphates as substrates. Forms the clamp head domain. The protein is DNA-directed RNA polymerase subunit Rpo1N of Halobacterium salinarum (strain ATCC 29341 / DSM 671 / R1).